A 244-amino-acid chain; its full sequence is 5-oxoprolinase subunit A (244 aa).

The protein belongs to the LamB/PxpA family. As to quaternary structure, forms a complex composed of PxpA, PxpB and PxpC.

The catalysed reaction is 5-oxo-L-proline + ATP + 2 H2O = L-glutamate + ADP + phosphate + H(+). Catalyzes the cleavage of 5-oxoproline to form L-glutamate coupled to the hydrolysis of ATP to ADP and inorganic phosphate. This Escherichia coli (strain K12) protein is 5-oxoprolinase subunit A.